Here is a 239-residue protein sequence, read N- to C-terminus: 1-(5-phosphoribosyl)-5-[(5-phosphoribosylamino)methylideneamino] imidazole-4-carboxamide isomerase (239 aa).

The active-site Proton acceptor is the D8. D129 functions as the Proton donor in the catalytic mechanism.

The protein belongs to the HisA/HisF family.

It is found in the cytoplasm. It carries out the reaction 1-(5-phospho-beta-D-ribosyl)-5-[(5-phospho-beta-D-ribosylamino)methylideneamino]imidazole-4-carboxamide = 5-[(5-phospho-1-deoxy-D-ribulos-1-ylimino)methylamino]-1-(5-phospho-beta-D-ribosyl)imidazole-4-carboxamide. It functions in the pathway amino-acid biosynthesis; L-histidine biosynthesis; L-histidine from 5-phospho-alpha-D-ribose 1-diphosphate: step 4/9. In Cereibacter sphaeroides (strain ATCC 17029 / ATH 2.4.9) (Rhodobacter sphaeroides), this protein is 1-(5-phosphoribosyl)-5-[(5-phosphoribosylamino)methylideneamino] imidazole-4-carboxamide isomerase.